The following is a 360-amino-acid chain: D-alanine--D-alanine ligase (360 aa).

Positions 149–353 (KKLMAAEGLP…YEELLDVLVQ (205 aa)) constitute an ATP-grasp domain. Residue 176-231 (KNLLGLPVFVKPARGGSSIGISRVTAWEDFNKAVGLARAHDEKVIVESEIVGSEVE) coordinates ATP. Residues Asp308, Glu320, and Asn322 each contribute to the Mg(2+) site.

The protein belongs to the D-alanine--D-alanine ligase family. Mg(2+) is required as a cofactor. It depends on Mn(2+) as a cofactor.

It is found in the cytoplasm. The enzyme catalyses 2 D-alanine + ATP = D-alanyl-D-alanine + ADP + phosphate + H(+). The protein operates within cell wall biogenesis; peptidoglycan biosynthesis. Its function is as follows. Cell wall formation. The protein is D-alanine--D-alanine ligase of Corynebacterium glutamicum (strain R).